We begin with the raw amino-acid sequence, 260 residues long: Acetylglutamate kinase (260 aa).

Substrate contacts are provided by residues G41–G42, R63, and N156.

It belongs to the acetylglutamate kinase family. ArgB subfamily.

It is found in the cytoplasm. It catalyses the reaction N-acetyl-L-glutamate + ATP = N-acetyl-L-glutamyl 5-phosphate + ADP. Its pathway is amino-acid biosynthesis; L-arginine biosynthesis; N(2)-acetyl-L-ornithine from L-glutamate: step 2/4. Its function is as follows. Catalyzes the ATP-dependent phosphorylation of N-acetyl-L-glutamate. The polypeptide is Acetylglutamate kinase (Halalkalibacterium halodurans (strain ATCC BAA-125 / DSM 18197 / FERM 7344 / JCM 9153 / C-125) (Bacillus halodurans)).